The sequence spans 144 residues: MAREFSRTRRVGQQIQREIALILQREVKDPRIGMVTVSDVEVSRDLNYAKVYVTFLQLENDAERIKEGLKALTEAAGYIRSLLGSAMRLRVVPELRFFYDQTLVEGMRLSNLVTNTIREDKRRMAESGREEDDAAPDETTEDNA.

A disordered region spans residues 120–144 (DKRRMAESGREEDDAAPDETTEDNA). The span at 129–144 (REEDDAAPDETTEDNA) shows a compositional bias: acidic residues.

It belongs to the RbfA family. Monomer. Binds 30S ribosomal subunits, but not 50S ribosomal subunits or 70S ribosomes.

Its subcellular location is the cytoplasm. Functionally, one of several proteins that assist in the late maturation steps of the functional core of the 30S ribosomal subunit. Associates with free 30S ribosomal subunits (but not with 30S subunits that are part of 70S ribosomes or polysomes). Required for efficient processing of 16S rRNA. May interact with the 5'-terminal helix region of 16S rRNA. This chain is Ribosome-binding factor A, found in Aeromonas hydrophila subsp. hydrophila (strain ATCC 7966 / DSM 30187 / BCRC 13018 / CCUG 14551 / JCM 1027 / KCTC 2358 / NCIMB 9240 / NCTC 8049).